The following is a 120-amino-acid chain: Large ribosomal subunit protein bL17 (120 aa).

This sequence belongs to the bacterial ribosomal protein bL17 family. Part of the 50S ribosomal subunit. Contacts protein L32.

The sequence is that of Large ribosomal subunit protein bL17 from Geobacillus kaustophilus (strain HTA426).